A 240-amino-acid chain; its full sequence is uncharacterized protein (240 aa).

Residues 1 to 27 (MKDLQKKSSVRRQITNEDDERYGEDSI) form a disordered region. Residues Ser-59 and Ser-95 each carry the phosphoserine modification. A disordered region spans residues 189–227 (RTPSPTGKSVGDEATSNNMHSSSAIRNPNGPTVDPEEGK). Residues 202-218 (ATSNNMHSSSAIRNPNG) are compositionally biased toward polar residues.

This is an uncharacterized protein from Saccharomyces cerevisiae (strain ATCC 204508 / S288c) (Baker's yeast).